A 262-amino-acid polypeptide reads, in one-letter code: 1-(5-phosphoribosyl)-5-[(5-phosphoribosylamino)methylideneamino] imidazole-4-carboxamide isomerase (262 aa).

Asp-8 serves as the catalytic Proton acceptor. Asp-129 (proton donor) is an active-site residue. Residues 243 to 262 are disordered; that stretch reads KDNVGQEDHSLPRCEPGPRG.

Belongs to the HisA/HisF family.

Its subcellular location is the cytoplasm. The enzyme catalyses 1-(5-phospho-beta-D-ribosyl)-5-[(5-phospho-beta-D-ribosylamino)methylideneamino]imidazole-4-carboxamide = 5-[(5-phospho-1-deoxy-D-ribulos-1-ylimino)methylamino]-1-(5-phospho-beta-D-ribosyl)imidazole-4-carboxamide. It participates in amino-acid biosynthesis; L-histidine biosynthesis; L-histidine from 5-phospho-alpha-D-ribose 1-diphosphate: step 4/9. This chain is 1-(5-phosphoribosyl)-5-[(5-phosphoribosylamino)methylideneamino] imidazole-4-carboxamide isomerase, found in Desulforudis audaxviator (strain MP104C).